We begin with the raw amino-acid sequence, 3660 residues long: Dystrophin (3660 aa).

The interval 1-244 (MSAHVLWYEE…YVTSLFQVLP (244 aa)) is actin-binding. 2 Calponin-homology (CH) domains span residues 19-123 (DVQK…LHWQ) and 138-244 (TNSE…QVLP). 22 Spectrin repeats span residues 341–449 (MDLD…NLHK), 450–558 (ILMD…LLQD), 561–669 (RKWQ…QVSQ), 721–830 (EIRK…WLEY), 832–936 (NSII…QLQT), 945–1047 (RYKD…KLED), 1050–1156 (TKLQ…ALKG), 1159–1265 (DKTV…TLEE), 1268–1369 (ACWH…SLEQ), 1470–1570 (EQRL…ELEK), 1573–1678 (KLSR…LLME), 1681–1782 (KHME…FIPL), 1879–1981 (HQWY…TVLE), 2013–2103 (LSEV…RFDK), 2106–2211 (EKWR…RIEE), 2214–2321 (NILS…EIEI), 2472–2574 (FNKA…QLHE), 2577–2683 (KDST…ALES), 2686–2799 (LMLQ…HLEA), 2802–2904 (DQWK…LRRQ), 2906–2928 (DDVR…KIDD), and 2931–3037 (ERLQ…QLHE). Residues 3052–3085 (TSVQGPWERAISPNKVPYYINHETQTTCWDHPKM) enclose the WW domain. The segment at 3305-3361 (KHQAKCNICKECPIIGFRYRSLKHFNYDICQSCFFSGRVAKGHKMHYPMVEYCTPTT) adopts a ZZ-type; degenerate zinc-finger fold. Zn(2+) is bound by residues Cys3310, Cys3313, Cys3334, and Cys3337. Disordered stretches follow at residues 3503–3526 (KQQH…VSPQ) and 3575–3660 (PQAD…EATM). Polar residues-rich tracts occupy residues 3582–3601 (NGTT…SSQP) and 3637–3647 (QLNNSFPSSRG).

The protein localises to the cell membrane. It localises to the sarcolemma. It is found in the cytoplasm. The protein resides in the cytoskeleton. Its subcellular location is the postsynaptic cell membrane. Its function is as follows. May play a role in anchoring the cytoskeleton to the plasma membrane. The protein is Dystrophin (DMD) of Gallus gallus (Chicken).